A 448-amino-acid chain; its full sequence is MGSDVRDLNALLPAVSSLGGGGGCGLPVSGARQWAPVLDFAPPGASAYGSLGGPAPPPAPPPPPPPPHSFIKQEPSWGGAEPHEEQCLSAFTLHFSGQFTGTAGACRYGPFGPPPPSQASSGQARMFPNAPYLPSCLESQPSIRNQGYSTVTFDGAPSYGHTPSHHAAQFPNHSFKHEDPMGQQGSLGEQQYSVPPPVYGCHTPTDSCTGSQALLLRTPYSSDNLYQMTSQLECMTWNQMNLGATLKGMAAGSSSSVKWTEGQSNHGTGYESENHTTPILCGAQYRIHTHGVFRGIQDVRRVSGVAPTLVRSASETSEKRPFMCAYPGCNKRYFKLSHLQMHSRKHTGEKPYQCDFKDCERRFSRSDQLKRHQRRHTGVKPFQCKTCQRKFSRSDHLKTHTRTHTGKTSEKPFSCRWHSCQKKFARSDELVRHHNMHQRNMTKLHVAL.

Disordered regions lie at residues 48–83 and 166–186; these read YGSLGGPAPPPAPPPPPPPPHSFIKQEPSWGGAEPH and HAAQFPNHSFKHEDPMGQQGS. Pro residues predominate over residues 54–68; it reads PAPPPAPPPPPPPPH. Glycyl lysine isopeptide (Lys-Gly) (interchain with G-Cter in SUMO) cross-links involve residues lysine 72 and lysine 176. The short motif at 235–243 is the 9aaTAD element; that stretch reads MTWNQMNLG. C2H2-type zinc fingers lie at residues 322 to 346, 352 to 376, and 382 to 404; these read FMCAYPGCNKRYFKLSHLQMHSRKH, YQCDFKDCERRFSRSDQLKRHQRRH, and FQCKTCQRKFSRSDHLKTHTRTH. Important for interaction with target DNA stretches follow at residues 366–380 and 392–400; these read SDQLKRHQRRHTGVK and SRSDHLKTH. A KTS motif motif is present at residues 407–409; sequence KTS. A C2H2-type 4 zinc finger spans residues 413–437; the sequence is FSCRWHSCQKKFARSDELVRHHNMH. A Glycyl lysine isopeptide (Lys-Gly) (interchain with G-Cter in SUMO2) cross-link involves residue lysine 443.

Belongs to the EGR C2H2-type zinc-finger protein family. Interacts with ZNF224 via the zinc-finger region. Interacts with WTAP, AMER1 and SRY. Homodimer. Interacts with WTIP. Interacts with actively translating polysomes. Detected in nuclear ribonucleoprotein (mRNP) particles. Interacts with U2AF2. Interacts with HNRNPU via the zinc-finger region. Interacts with CITED2. In terms of tissue distribution, kidney.

It is found in the nucleus speckle. The protein localises to the nucleus. It localises to the nucleoplasm. Its subcellular location is the nucleolus. The protein resides in the cytoplasm. Transcription factor that plays an important role in cellular development and cell survival. Recognizes and binds to the DNA sequence 5'-GCG(T/G)GGGCG-3'. Regulates the expression of numerous target genes, including EPO. Plays an essential role for development of the urogenital system. It has a tumor suppressor as well as an oncogenic role in tumor formation. Function may be isoform-specific: isoforms lacking the KTS motif may act as transcription factors. Isoforms containing the KTS motif may bind mRNA and play a role in mRNA metabolism or splicing. Isoform 1 has lower affinity for DNA, and can bind RNA. The protein is Wilms tumor protein homolog (Wt1) of Rattus norvegicus (Rat).